A 316-amino-acid polypeptide reads, in one-letter code: Acetaldehyde dehydrogenase (316 aa).

NAD(+) is bound at residue 11–14 (SGNI). Cys-131 (acyl-thioester intermediate) is an active-site residue. NAD(+) is bound by residues 162–170 (SAGPGTRAN) and Asn-289.

This sequence belongs to the acetaldehyde dehydrogenase family. In terms of assembly, interacts with MhpE.

It catalyses the reaction acetaldehyde + NAD(+) + CoA = acetyl-CoA + NADH + H(+). The protein operates within aromatic compound metabolism; 3-phenylpropanoate degradation. Functionally, catalyzes the conversion of acetaldehyde to acetyl-CoA, using NAD(+) and coenzyme A. Is the final enzyme in the meta-cleavage pathway for the degradation of aromatic compounds. This chain is Acetaldehyde dehydrogenase, found in Escherichia coli O157:H7.